Consider the following 49-residue polypeptide: Large ribosomal subunit protein bL33A (49 aa).

Positions 20-49 (KKNKRNNPDRVEFKKYCPRDKKSTLHRETK) are disordered. Residues 25–49 (NNPDRVEFKKYCPRDKKSTLHRETK) are compositionally biased toward basic and acidic residues.

The protein belongs to the bacterial ribosomal protein bL33 family. As to quaternary structure, part of the 50S ribosomal subunit. Interacts with VmlR.

This is Large ribosomal subunit protein bL33A (rpmGA) from Bacillus subtilis (strain 168).